The sequence spans 451 residues: Porin AaxA (451 aa).

The N-terminal stretch at 1–27 is a signal peptide; it reads MASFHSSLLTALCTLCTYGILTMPAYG.

It belongs to the OprB family.

It localises to the cell outer membrane. Functionally, facilitates L-arginine uptake, as part of the AaxABC system. The arginine uptake by the bacterium in the macrophage may be a virulence factor against the host innate immune response. This Chlamydia caviae (strain ATCC VR-813 / DSM 19441 / 03DC25 / GPIC) (Chlamydophila caviae) protein is Porin AaxA (aaxA).